Reading from the N-terminus, the 369-residue chain is Beta-1,4-galactosyltransferase 2 (369 aa).

The Cytoplasmic portion of the chain corresponds to methionine 1–alanine 15. The chain crosses the membrane as a helical; Signal-anchor for type II membrane protein span at residues valine 16–alanine 36. Topologically, residues glutamine 37–glycine 369 are lumenal. A compositionally biased stretch (polar residues) spans serine 59–glycine 75. The interval serine 59 to valine 90 is disordered. N-linked (GlcNAc...) asparagine glycans are attached at residues asparagine 63 and asparagine 68. An intrachain disulfide couples cysteine 94 to cysteine 136. UDP-alpha-D-galactose is bound by residues proline 147–arginine 151, phenylalanine 186–arginine 188, valine 214–aspartate 215, and tryptophan 275. Cysteine 208 and cysteine 227 are oxidised to a cystine. Mn(2+) is bound at residue aspartate 215. Position 277-280 (glycine 277–aspartate 280) interacts with N-acetyl-D-glucosamine. Residue histidine 308 coordinates Mn(2+). A UDP-alpha-D-galactose-binding site is contributed by histidine 308–arginine 310. Arginine 320 lines the N-acetyl-D-glucosamine pocket. Asparagine 354 carries N-linked (GlcNAc...) asparagine glycosylation.

This sequence belongs to the glycosyltransferase 7 family. The cofactor is Mn(2+).

It is found in the golgi apparatus. The protein resides in the golgi stack membrane. The enzyme catalyses D-glucose + UDP-alpha-D-galactose = lactose + UDP + H(+). It carries out the reaction an N-acetyl-beta-D-glucosaminyl derivative + UDP-alpha-D-galactose = a beta-D-galactosyl-(1-&gt;4)-N-acetyl-beta-D-glucosaminyl derivative + UDP + H(+). It catalyses the reaction N-acetyl-D-glucosamine + UDP-alpha-D-galactose = beta-D-galactosyl-(1-&gt;4)-N-acetyl-D-glucosamine + UDP + H(+). Its pathway is protein modification; protein glycosylation. Its function is as follows. Responsible for the synthesis of complex-type N-linked oligosaccharides in many glycoproteins as well as the carbohydrate moieties of glycolipids. Can produce lactose. In Cricetulus griseus (Chinese hamster), this protein is Beta-1,4-galactosyltransferase 2 (B4GALT2).